Reading from the N-terminus, the 199-residue chain is SCO2-like protein RBE_0029 (199 aa).

Belongs to the SCO1/2 family.

This Rickettsia bellii (strain RML369-C) protein is SCO2-like protein RBE_0029.